The sequence spans 255 residues: Acetylglutamate kinase (255 aa).

Residues 40–41 (GG), R62, and N153 each bind substrate.

Belongs to the acetylglutamate kinase family. ArgB subfamily.

It is found in the cytoplasm. The enzyme catalyses N-acetyl-L-glutamate + ATP = N-acetyl-L-glutamyl 5-phosphate + ADP. It participates in amino-acid biosynthesis; L-arginine biosynthesis; N(2)-acetyl-L-ornithine from L-glutamate: step 2/4. Functionally, catalyzes the ATP-dependent phosphorylation of N-acetyl-L-glutamate. This Bacillus mycoides (strain KBAB4) (Bacillus weihenstephanensis) protein is Acetylglutamate kinase.